The following is a 224-amino-acid chain: MDVSAALSSDYSSGTPSPVAADADDGSSAYMTVSSAPPKRRAGRTKFKETRHPVFKGVRRRNPGRWVCEVREPHGKQRIWLGTFETAEMAARAHDVAALALRGRAACLNFADSPRRLRVPPIGASHDDIRRAAAEAAEAFRPPPDESNAATEVAAAASGATNSNAEQFASHPYYEVMDDGLDLGMQGYLDMAQGMLIDPPPMAGDPAVGSGEDDNDGEVQLWSY.

Residues 1-16 (MDVSAALSSDYSSGTP) are compositionally biased toward polar residues. The segment at 1–46 (MDVSAALSSDYSSGTPSPVAADADDGSSAYMTVSSAPPKRRAGRTK) is disordered. Positions 54–111 (VFKGVRRRNPGRWVCEVREPHGKQRIWLGTFETAEMAARAHDVAALALRGRAACLNFA) form a DNA-binding region, AP2/ERF. Disordered regions lie at residues 139 to 161 (AFRP…SGAT) and 200 to 224 (PPMA…LWSY).

The protein belongs to the AP2/ERF transcription factor family. ERF subfamily.

The protein resides in the nucleus. Functionally, transcriptional activator that binds specifically to the DNA sequence 5'-[AG]CCGAC-3'. Binding to the C-repeat/DRE element mediates high salinity- and dehydration-inducible transcription. The protein is Dehydration-responsive element-binding protein 1G (DREB1G) of Oryza sativa subsp. japonica (Rice).